Reading from the N-terminus, the 526-residue chain is Ubiquitin carboxyl-terminal hydrolase 17-like protein A (526 aa).

Residues 1-21 (MVVALSFPEADPALSSPDAPE) are disordered. The region spanning 51 to 348 (CGLQNTGNSC…NAYVLFYVQQ (298 aa)) is the USP domain. Catalysis depends on Cys60, which acts as the Nucleophile. His307 (proton acceptor) is an active-site residue. Over residues 374–385 (KKSRRKKHKKKS) the composition is skewed to basic residues. 2 disordered regions span residues 374 to 394 (KKSRRKKHKKKSPFTEDLGEP) and 465 to 494 (RSTANWGRDSPDKENQPLHNADRLLTSQGP). Residues 473–486 (DSPDKENQPLHNAD) show a composition bias toward basic and acidic residues.

It belongs to the peptidase C19 family. Post-translationally, polyubiquitinated; ubiquitination leads to its subsequent degradation. In terms of tissue distribution, expressed in hematopoietic progenitor cell lines Ba/F3 and FDCP1. Not detected in brain, lung, liver, kidney, thymus, spleen and bone marrow.

It carries out the reaction Thiol-dependent hydrolysis of ester, thioester, amide, peptide and isopeptide bonds formed by the C-terminal Gly of ubiquitin (a 76-residue protein attached to proteins as an intracellular targeting signal).. Functionally, deubiquitinating enzyme that removes conjugated ubiquitin from specific proteins to regulate different cellular processes. Has deubiquitinating enzyme activity for DNAH5, suggesting a role in the regulation of DNAH5 degradation by the ubiquitin-proteasome pathway. Has growth-suppressing activity; induces arrest in G1 phase upon controlled expression. This Mus musculus (Mouse) protein is Ubiquitin carboxyl-terminal hydrolase 17-like protein A (Usp17la).